The following is a 331-amino-acid chain: Probable inactive O-methyltransferase 11 (331 aa).

Residues Gly179, Asp202, 224-226 (GDF), Asp225, Phe226, and Lys239 contribute to the S-adenosyl-L-methionine site.

Belongs to the class I-like SAM-binding methyltransferase superfamily. Cation-independent O-methyltransferase family. COMT subfamily.

The chain is Probable inactive O-methyltransferase 11 (omt11) from Dictyostelium discoideum (Social amoeba).